Consider the following 388-residue polypeptide: Probable tRNA sulfurtransferase (388 aa).

A THUMP domain is found at 55 to 162 (VTLDDKLKKI…PEGVLIFTDR (108 aa)). ATP-binding positions include 180–181 (LL), 205–206 (TF), Arg264, Gly286, and Gln295.

The protein belongs to the ThiI family.

It localises to the cytoplasm. It catalyses the reaction [ThiI sulfur-carrier protein]-S-sulfanyl-L-cysteine + a uridine in tRNA + 2 reduced [2Fe-2S]-[ferredoxin] + ATP + H(+) = [ThiI sulfur-carrier protein]-L-cysteine + a 4-thiouridine in tRNA + 2 oxidized [2Fe-2S]-[ferredoxin] + AMP + diphosphate. It carries out the reaction [ThiS sulfur-carrier protein]-C-terminal Gly-Gly-AMP + S-sulfanyl-L-cysteinyl-[cysteine desulfurase] + AH2 = [ThiS sulfur-carrier protein]-C-terminal-Gly-aminoethanethioate + L-cysteinyl-[cysteine desulfurase] + A + AMP + 2 H(+). It functions in the pathway cofactor biosynthesis; thiamine diphosphate biosynthesis. Catalyzes the ATP-dependent transfer of a sulfur to tRNA to produce 4-thiouridine in position 8 of tRNAs, which functions as a near-UV photosensor. Also catalyzes the transfer of sulfur to the sulfur carrier protein ThiS, forming ThiS-thiocarboxylate. This is a step in the synthesis of thiazole, in the thiamine biosynthesis pathway. The sulfur is donated as persulfide by IscS. The sequence is that of Probable tRNA sulfurtransferase from Thermotoga maritima (strain ATCC 43589 / DSM 3109 / JCM 10099 / NBRC 100826 / MSB8).